Consider the following 323-residue polypeptide: Transcription initiation factor IIB 7 (323 aa).

The span at 1–16 (MTRSTRQRERETAAKQ) shows a compositional bias: basic and acidic residues. The segment at 1-35 (MTRSTRQRERETAAKQEEEEDSEEGVRECPECGSD) is disordered. The segment at 24 to 56 (EGVRECPECGSDNLVKSSDRAELVCNDCGLVVE) adopts a TFIIB-type zinc-finger fold. Positions 29, 32, 48, and 51 each coordinate Zn(2+). A run of 2 repeats spans residues 142–225 (SEID…SQEL) and 236–317 (KYVP…EQIE).

It belongs to the TFIIB family.

In terms of biological role, stabilizes TBP binding to an archaeal box-A promoter. Also responsible for recruiting RNA polymerase II to the pre-initiation complex (DNA-TBP-TFIIB). This chain is Transcription initiation factor IIB 7, found in Halobacterium salinarum (strain ATCC 700922 / JCM 11081 / NRC-1) (Halobacterium halobium).